The primary structure comprises 332 residues: Tryptophan--tRNA ligase (332 aa).

Residues 11 to 13 (QPS) and 19 to 20 (GN) contribute to the ATP site. The 'HIGH' region motif lies at 12–20 (PSGELTIGN). D135 contributes to the L-tryptophan binding site. ATP-binding positions include 147–149 (GQD), V186, and 195–199 (KMSKS). A 'KMSKS' region motif is present at residues 195–199 (KMSKS).

It belongs to the class-I aminoacyl-tRNA synthetase family. As to quaternary structure, homodimer.

The protein resides in the cytoplasm. The enzyme catalyses tRNA(Trp) + L-tryptophan + ATP = L-tryptophyl-tRNA(Trp) + AMP + diphosphate + H(+). Functionally, catalyzes the attachment of tryptophan to tRNA(Trp). This chain is Tryptophan--tRNA ligase, found in Shewanella oneidensis (strain ATCC 700550 / JCM 31522 / CIP 106686 / LMG 19005 / NCIMB 14063 / MR-1).